A 341-amino-acid polypeptide reads, in one-letter code: Protein pelota homolog (341 aa).

The protein belongs to the eukaryotic release factor 1 family. Pelota subfamily. In terms of assembly, monomer. A divalent metal cation is required as a cofactor.

Its subcellular location is the cytoplasm. May function in recognizing stalled ribosomes, interact with stem-loop structures in stalled mRNA molecules, and effect endonucleolytic cleavage of the mRNA. May play a role in the release non-functional ribosomes and degradation of damaged mRNAs. Has endoribonuclease activity. The sequence is that of Protein pelota homolog from Methanoculleus marisnigri (strain ATCC 35101 / DSM 1498 / JR1).